The chain runs to 768 residues: Protein ITPRID2 (768 aa).

Disordered regions lie at residues 1–24, 39–78, and 98–124; these read MTTEDHLLRTASQHSDSSGFAEDS, LQAMGSSADSCDSETTVTSLGEDLATPTAQDQPYFNESEE, and RKSGSQDFPQCNTIENPGTKQSTCSPG. 2 stretches are compositionally biased toward polar residues: residues 39-57 and 102-122; these read LQAMGSSADSCDSETTVTS and SQDFPQCNTIENPGTKQSTCS. Phosphoserine is present on residues S153, S177, S246, S248, S255, S268, S276, and S312. Positions 315–338 are disordered; the sequence is SVKKEEAPQSEAPRVEECHHGRTP. Over residues 316-334 the composition is skewed to basic and acidic residues; that stretch reads VKKEEAPQSEAPRVEECHH. K317 is covalently cross-linked (Glycyl lysine isopeptide (Lys-Gly) (interchain with G-Cter in SUMO2)). Residues S378 and S411 each carry the phosphoserine modification. The stretch at 468–546 forms a coiled coil; that stretch reads QELQVMRRSL…GLEEQLRAVR (79 aa). S549, S564, S569, S572, S627, and S643 each carry phosphoserine. Disordered stretches follow at residues 605-647 and 663-718; these read IPPG…VGKP and ALTP…AAEE. Polar residues predominate over residues 610–627; that stretch reads SSESVFSQATSESSSVCS. The residue at position 665 (T665) is a Phosphothreonine. The segment covering 667–677 has biased composition (polar residues); the sequence is TAPSRTGSVQT. The residue at position 670 (S670) is a Phosphoserine. T677 is subject to Phosphothreonine. Residues 682–694 are compositionally biased toward acidic residues; it reads ESSEEVDAAEEAP.

Its subcellular location is the cytoplasm. The polypeptide is Protein ITPRID2 (Pongo abelii (Sumatran orangutan)).